We begin with the raw amino-acid sequence, 369 residues long: MAKFELYAEVDVSISGHQYPIIICRNGLIDPELINRFITSKQVLIVTNRTVAPLYLGHLQSVLPSKQCDVVILEDGEEHKNQRSLFTIYDSLIQNKHHRDTSIIALGGGVIGDMAGFAASTYQRGVRFIQLPTTLLAQVDASVGGKTAINHPAGKNMIGSFYQPQAVIIDLNTLKTLPEREFRAGIAEMIKYALLVGGSFFERIQEALQQGLTVHSPELPLLIAECCQVKAKIVEQDERESGLRALLNLGHTFAHALETYTDYKKWLHGEAVAIGLYCAAVLSEKKGLLDKPIVDQVEKMLIHAGLPHKIPNSIDLIQLRELMSLDKKIKNNCLRFVMIKKPGACYIDDSVTEDCLHNALINVVEGERK.

NAD(+) is bound by residues 75 to 80 (DGEEHK), 109 to 113 (GVIGD), 133 to 134 (TT), Lys-146, Lys-155, and 173 to 176 (TLKT). Residues Glu-188, His-251, and His-268 each coordinate Zn(2+).

It belongs to the sugar phosphate cyclases superfamily. Dehydroquinate synthase family. Requires Co(2+) as cofactor. Zn(2+) is required as a cofactor. It depends on NAD(+) as a cofactor.

Its subcellular location is the cytoplasm. The catalysed reaction is 7-phospho-2-dehydro-3-deoxy-D-arabino-heptonate = 3-dehydroquinate + phosphate. The protein operates within metabolic intermediate biosynthesis; chorismate biosynthesis; chorismate from D-erythrose 4-phosphate and phosphoenolpyruvate: step 2/7. Functionally, catalyzes the conversion of 3-deoxy-D-arabino-heptulosonate 7-phosphate (DAHP) to dehydroquinate (DHQ). This is 3-dehydroquinate synthase from Legionella pneumophila subsp. pneumophila (strain Philadelphia 1 / ATCC 33152 / DSM 7513).